The sequence spans 147 residues: Sec-independent protein translocase protein TatB (147 aa).

A helical membrane pass occupies residues 1 to 21; it reads MFDISFSEILVIAAVALIVIG. Over residues 67 to 88 the composition is skewed to basic and acidic residues; that stretch reads EETGRSIENSVHTELDKFRETV. The interval 67–147 is disordered; sequence EETGRSIENS…GVNRERETAE (81 aa). The segment covering 103–117 has biased composition (low complexity); it reads APAGESSPPQNSSPA.

This sequence belongs to the TatB family. The Tat system comprises two distinct complexes: a TatABC complex, containing multiple copies of TatA, TatB and TatC subunits, and a separate TatA complex, containing only TatA subunits. Substrates initially bind to the TatABC complex, which probably triggers association of the separate TatA complex to form the active translocon.

It is found in the cell inner membrane. Functionally, part of the twin-arginine translocation (Tat) system that transports large folded proteins containing a characteristic twin-arginine motif in their signal peptide across membranes. Together with TatC, TatB is part of a receptor directly interacting with Tat signal peptides. TatB may form an oligomeric binding site that transiently accommodates folded Tat precursor proteins before their translocation. The protein is Sec-independent protein translocase protein TatB of Nitrosospira multiformis (strain ATCC 25196 / NCIMB 11849 / C 71).